Here is a 132-residue protein sequence, read N- to C-terminus: Arginine decarboxylase proenzyme (132 aa).

S70 serves as the catalytic Schiff-base intermediate with substrate; via pyruvic acid. S70 carries the post-translational modification Pyruvic acid (Ser); by autocatalysis. H75 acts as the Proton acceptor; for processing activity in catalysis. C90 acts as the Proton donor; for catalytic activity in catalysis.

The protein belongs to the prokaryotic AdoMetDC family. Type 1 subfamily. As to quaternary structure, heterooctamer of four alpha and four beta chains arranged as a tetramer of alpha/beta heterodimers. The cofactor is pyruvate. Is synthesized initially as an inactive proenzyme. Formation of the active enzyme involves a self-maturation process in which the active site pyruvoyl group is generated from an internal serine residue via an autocatalytic post-translational modification. Two non-identical subunits are generated from the proenzyme in this reaction, and the pyruvate is formed at the N-terminus of the alpha chain, which is derived from the carboxyl end of the proenzyme. The post-translation cleavage follows an unusual pathway, termed non-hydrolytic serinolysis, in which the side chain hydroxyl group of the serine supplies its oxygen atom to form the C-terminus of the beta chain, while the remainder of the serine residue undergoes an oxidative deamination to produce ammonia and the pyruvoyl group blocking the N-terminus of the alpha chain.

It carries out the reaction L-arginine + H(+) = agmatine + CO2. It participates in amine and polyamine biosynthesis; agmatine biosynthesis; agmatine from L-arginine: step 1/1. Its function is as follows. Specifically catalyzes the decarboxylation of L-arginine to agmatine. Has no S-adenosylmethionine decarboxylase (AdoMetDC) activity. The polypeptide is Arginine decarboxylase proenzyme (Aeropyrum pernix (strain ATCC 700893 / DSM 11879 / JCM 9820 / NBRC 100138 / K1)).